The primary structure comprises 203 residues: CS5 fimbrial subunit (203 aa).

Positions Met1–Ala22 are cleaved as a signal peptide.

It localises to the fimbrium. Its function is as follows. Major subunit of fimbriae. Fimbriae (also called pili), are polar filaments radiating from the surface of the bacterium to a length of 0.5-1.5 micrometers and numbering 100-300 per cell. They enable bacteria to colonize the epithelium of specific host organs. The protein is CS5 fimbrial subunit of Escherichia coli.